We begin with the raw amino-acid sequence, 329 residues long: Ribosomal RNA small subunit methyltransferase H (329 aa).

S-adenosyl-L-methionine contacts are provided by residues 47–49 (GGH), D67, F93, D115, and Q122.

Belongs to the methyltransferase superfamily. RsmH family.

The protein localises to the cytoplasm. The catalysed reaction is cytidine(1402) in 16S rRNA + S-adenosyl-L-methionine = N(4)-methylcytidine(1402) in 16S rRNA + S-adenosyl-L-homocysteine + H(+). Specifically methylates the N4 position of cytidine in position 1402 (C1402) of 16S rRNA. The polypeptide is Ribosomal RNA small subunit methyltransferase H (Blochmanniella pennsylvanica (strain BPEN)).